The sequence spans 215 residues: ATP-dependent dethiobiotin synthetase BioD (215 aa).

13–18 (DIGKTV) lines the ATP pocket. Residue T17 coordinates Mg(2+). K38 is a catalytic residue. T42 lines the substrate pocket. Residues D50, 115–118 (EGAG), and 175–176 (NH) contribute to the ATP site. D50 and E115 together coordinate Mg(2+).

It belongs to the dethiobiotin synthetase family. As to quaternary structure, homodimer. The cofactor is Mg(2+).

It localises to the cytoplasm. The catalysed reaction is (7R,8S)-7,8-diammoniononanoate + CO2 + ATP = (4R,5S)-dethiobiotin + ADP + phosphate + 3 H(+). The protein operates within cofactor biosynthesis; biotin biosynthesis; biotin from 7,8-diaminononanoate: step 1/2. Catalyzes a mechanistically unusual reaction, the ATP-dependent insertion of CO2 between the N7 and N8 nitrogen atoms of 7,8-diaminopelargonic acid (DAPA, also called 7,8-diammoniononanoate) to form a ureido ring. This is ATP-dependent dethiobiotin synthetase BioD from Neisseria gonorrhoeae (strain NCCP11945).